A 156-amino-acid polypeptide reads, in one-letter code: Small ribosomal subunit protein uS7 (156 aa).

This sequence belongs to the universal ribosomal protein uS7 family. As to quaternary structure, part of the 30S ribosomal subunit. Contacts proteins S9 and S11.

One of the primary rRNA binding proteins, it binds directly to 16S rRNA where it nucleates assembly of the head domain of the 30S subunit. Is located at the subunit interface close to the decoding center, probably blocks exit of the E-site tRNA. The polypeptide is Small ribosomal subunit protein uS7 (Rhodopseudomonas palustris (strain BisB5)).